Reading from the N-terminus, the 388-residue chain is Peptide chain release factor subunit 1 (388 aa).

The protein belongs to the eukaryotic release factor 1 family. Heterodimer of two subunits, one of which binds GTP.

It localises to the cytoplasm. Functionally, directs the termination of nascent peptide synthesis (translation) in response to the termination codons UAA, UAG and UGA. The protein is Peptide chain release factor subunit 1 (prf1) of Pyrobaculum aerophilum (strain ATCC 51768 / DSM 7523 / JCM 9630 / CIP 104966 / NBRC 100827 / IM2).